The chain runs to 158 residues: NADH-quinone oxidoreductase subunit B (158 aa).

4 residues coordinate [4Fe-4S] cluster: C37, C38, C102, and C132.

The protein belongs to the complex I 20 kDa subunit family. NDH-1 is composed of 14 different subunits. Subunits NuoB, C, D, E, F, and G constitute the peripheral sector of the complex. [4Fe-4S] cluster is required as a cofactor.

It localises to the cell inner membrane. It carries out the reaction a quinone + NADH + 5 H(+)(in) = a quinol + NAD(+) + 4 H(+)(out). NDH-1 shuttles electrons from NADH, via FMN and iron-sulfur (Fe-S) centers, to quinones in the respiratory chain. Couples the redox reaction to proton translocation (for every two electrons transferred, four hydrogen ions are translocated across the cytoplasmic membrane), and thus conserves the redox energy in a proton gradient. This Aromatoleum aromaticum (strain DSM 19018 / LMG 30748 / EbN1) (Azoarcus sp. (strain EbN1)) protein is NADH-quinone oxidoreductase subunit B.